The sequence spans 398 residues: Gastric triacylglycerol lipase (398 aa).

An N-terminal signal peptide occupies residues 1–19 (MWLLLTMASLISVLGTTHG). 2 N-linked (GlcNAc...) asparagine glycosylation sites follow: asparagine 34 and asparagine 99. The AB hydrolase-1 domain maps to 78 to 377 (PVVFLQHGLL…PFYNHLDFIW (300 aa)). Residue serine 172 is the Nucleophile of the active site. Cysteine 246 and cysteine 255 are oxidised to a cystine. N-linked (GlcNAc...) asparagine glycans are attached at residues asparagine 271 and asparagine 327. Active-site charge relay system residues include aspartate 343 and histidine 372.

This sequence belongs to the AB hydrolase superfamily. Lipase family.

The protein localises to the secreted. It catalyses the reaction a triacylglycerol + H2O = a diacylglycerol + a fatty acid + H(+). It carries out the reaction 1,2,3-tri-(9Z-octadecenoyl)-glycerol + H2O = 1,2-di-(9Z-octadecenoyl)-sn-glycerol + (9Z)-octadecenoate + H(+). The catalysed reaction is 1,2,3-trioctanoylglycerol + H2O = 1,2-dioctanoyl-sn-glycerol + octanoate + H(+). Catalyzes the hydrolysis of triacylglycerols to yield free fatty acids, diacylglycerol, monoacylglycerol, and glycerol. Shows a preferential hydrolysis at the sn-3 position of triacylglycerol. The polypeptide is Gastric triacylglycerol lipase (LIPF) (Homo sapiens (Human)).